A 450-amino-acid polypeptide reads, in one-letter code: Bifunctional protein GlmU (450 aa).

The interval methionine 1–arginine 217 is pyrophosphorylase. Residues leucine 6–glycine 9, lysine 20, glutamine 68, glycine 73–threonine 74, tyrosine 95–aspartate 97, glycine 134, glutamate 146, asparagine 161, and asparagine 215 each bind UDP-N-acetyl-alpha-D-glucosamine. Aspartate 97 contributes to the Mg(2+) binding site. Asparagine 215 contacts Mg(2+). The tract at residues isoleucine 218–glutamine 238 is linker. An N-acetyltransferase region spans residues glycine 239–lysine 450. The UDP-N-acetyl-alpha-D-glucosamine site is built by arginine 320 and lysine 338. The Proton acceptor role is filled by histidine 350. UDP-N-acetyl-alpha-D-glucosamine-binding residues include tyrosine 353 and asparagine 364. Acetyl-CoA is bound by residues alanine 367, asparagine 373–tyrosine 374, serine 392, alanine 410, and arginine 427.

In the N-terminal section; belongs to the N-acetylglucosamine-1-phosphate uridyltransferase family. This sequence in the C-terminal section; belongs to the transferase hexapeptide repeat family. In terms of assembly, homotrimer. It depends on Mg(2+) as a cofactor.

Its subcellular location is the cytoplasm. It carries out the reaction alpha-D-glucosamine 1-phosphate + acetyl-CoA = N-acetyl-alpha-D-glucosamine 1-phosphate + CoA + H(+). The enzyme catalyses N-acetyl-alpha-D-glucosamine 1-phosphate + UTP + H(+) = UDP-N-acetyl-alpha-D-glucosamine + diphosphate. It functions in the pathway nucleotide-sugar biosynthesis; UDP-N-acetyl-alpha-D-glucosamine biosynthesis; N-acetyl-alpha-D-glucosamine 1-phosphate from alpha-D-glucosamine 6-phosphate (route II): step 2/2. Its pathway is nucleotide-sugar biosynthesis; UDP-N-acetyl-alpha-D-glucosamine biosynthesis; UDP-N-acetyl-alpha-D-glucosamine from N-acetyl-alpha-D-glucosamine 1-phosphate: step 1/1. It participates in bacterial outer membrane biogenesis; LPS lipid A biosynthesis. Its function is as follows. Catalyzes the last two sequential reactions in the de novo biosynthetic pathway for UDP-N-acetylglucosamine (UDP-GlcNAc). The C-terminal domain catalyzes the transfer of acetyl group from acetyl coenzyme A to glucosamine-1-phosphate (GlcN-1-P) to produce N-acetylglucosamine-1-phosphate (GlcNAc-1-P), which is converted into UDP-GlcNAc by the transfer of uridine 5-monophosphate (from uridine 5-triphosphate), a reaction catalyzed by the N-terminal domain. In Thermosipho melanesiensis (strain DSM 12029 / CIP 104789 / BI429), this protein is Bifunctional protein GlmU.